Reading from the N-terminus, the 190-residue chain is MSVRVSGKHMEIGDSFRVRIGEQIEQAVTKYFDGGYSSQVTVEKSGSRFSADCKLHLDTGVVLQANGQANEPQSAFDAASERIEKRLRRYKRKLKDHHNGNGQNSTEVAYRVMDSVPFEDEEVPDDYAPTIVAETTKQLRTMSVANAVMALDMTDEPVLMFRSPGKDDLNIVYRRNDGNIGWIDAANIKA.

It belongs to the HPF/YfiA ribosome-associated protein family. Long HPF subfamily. In terms of assembly, interacts with 100S ribosomes.

It localises to the cytoplasm. In terms of biological role, required for dimerization of active 70S ribosomes into 100S ribosomes in stationary phase; 100S ribosomes are translationally inactive and sometimes present during exponential growth. This is Ribosome hibernation promotion factor from Rhizobium meliloti (strain 1021) (Ensifer meliloti).